The chain runs to 243 residues: Ubiquinone/menaquinone biosynthesis C-methyltransferase UbiE (243 aa).

Residues Thr-69, Asp-90, and 116–117 (DA) each bind S-adenosyl-L-methionine.

The protein belongs to the class I-like SAM-binding methyltransferase superfamily. MenG/UbiE family.

The enzyme catalyses a 2-demethylmenaquinol + S-adenosyl-L-methionine = a menaquinol + S-adenosyl-L-homocysteine + H(+). The catalysed reaction is a 2-methoxy-6-(all-trans-polyprenyl)benzene-1,4-diol + S-adenosyl-L-methionine = a 5-methoxy-2-methyl-3-(all-trans-polyprenyl)benzene-1,4-diol + S-adenosyl-L-homocysteine + H(+). Its pathway is quinol/quinone metabolism; menaquinone biosynthesis; menaquinol from 1,4-dihydroxy-2-naphthoate: step 2/2. The protein operates within cofactor biosynthesis; ubiquinone biosynthesis. In terms of biological role, methyltransferase required for the conversion of demethylmenaquinol (DMKH2) to menaquinol (MKH2) and the conversion of 2-polyprenyl-6-methoxy-1,4-benzoquinol (DDMQH2) to 2-polyprenyl-3-methyl-6-methoxy-1,4-benzoquinol (DMQH2). The chain is Ubiquinone/menaquinone biosynthesis C-methyltransferase UbiE from Cupriavidus pinatubonensis (strain JMP 134 / LMG 1197) (Cupriavidus necator (strain JMP 134)).